A 2177-amino-acid chain; its full sequence is Mediator of RNA polymerase II transcription subunit 12 (2177 aa).

Positions 12–35 are disordered; sequence RPLKRPRLGPPDVYPQDPKQKEDE. Lys-80 is subject to N6-acetyllysine. Tyr-166 is modified (phosphotyrosine). Disordered stretches follow at residues 323–344, 627–669, 690–717, and 1241–1266; these read QSTSTLPTTPAPQPPTSSTPST, GAPG…MDID, TMPCEGKGSPSPEKPDVEKEVKPPPKEK, and TVTGGTEELPEEEGGGGSGGRRQGGR. Phosphoserine occurs at positions 635, 665, 698, and 700. Residues 702–717 are compositionally biased toward basic and acidic residues; the sequence is EKPDVEKEVKPPPKEK. 2 positions are modified to phosphoserine: Ser-1258 and Ser-1269. A compositionally biased stretch (low complexity) spans 1394–1411; the sequence is AETGSSSGSTASNMPSSS. 3 disordered regions span residues 1394 to 1415, 1450 to 1474, and 1738 to 1829; these read AETGSSSGSTASNMPSSSKTKP, ELEKGQHLGSSSRKERDRQKQKSMS, and YLEP…PGSI. Basic and acidic residues-rich tracts occupy residues 1450 to 1469 and 1758 to 1771; these read ELEKGQHLGSSSRKERDRQK and EPEKKAPEPPKTDK. Residues 1616–2051 form an interaction with CTNNB1 and GLI3 region; that stretch reads LAKKLQKELG…VRSTAILPEQ (436 aa). Residues 1784-1793 are compositionally biased toward basic residues; it reads KKSTKGKKRS. Lys-1798 carries the post-translational modification N6-acetyllysine. Arg-1899 carries the asymmetric dimethylarginine; alternate modification. Arg-1899 is modified (omega-N-methylarginine; alternate). Omega-N-methylarginine is present on Arg-1910. Disordered stretches follow at residues 1919–1938 and 1967–1989; these read QGMLGQSSVHQMTPSSSYGL and SYSSQPYQSTHPSTNPTLVDPTR. Residues 1927-1938 show a composition bias toward polar residues; that stretch reads VHQMTPSSSYGL. Residues 1967–1980 are compositionally biased toward low complexity; the sequence is SYSSQPYQSTHPST. An asymmetric dimethylarginine mark is found at Arg-1994 and Arg-2015. 3 stretches are compositionally biased toward low complexity: residues 2115-2125, 2133-2149, and 2158-2171; these read QHQQQQQQQAA, SQPQFQRQGLQQTQQQQ, and LQQQLSNTQPQPST. 2 disordered regions span residues 2115 to 2149 and 2158 to 2177; these read QHQQQQQQQAAPPQPQPQSQPQFQRQGLQQTQQQQ and LQQQLSNTQPQPSTNIFGRY.

The protein belongs to the Mediator complex subunit 12 family. As to quaternary structure, component of the Mediator complex, which is composed of MED1, MED4, MED6, MED7, MED8, MED9, MED10, MED11, MED12, MED13, MED13L, MED14, MED15, MED16, MED17, MED18, MED19, MED20, MED21, MED22, MED23, MED24, MED25, MED26, MED27, MED29, MED30, MED31, CCNC, CDK8 and CDC2L6/CDK11. The MED12, MED13, CCNC and CDK8 subunits form a distinct module termed the CDK8 module. Mediator containing the CDK8 module is less active than Mediator lacking this module in supporting transcriptional activation. Individual preparations of the Mediator complex lacking one or more distinct subunits have been variously termed ARC, CRSP, DRIP, PC2, SMCC and TRAP. Also interacts with CTNNB1 and GLI3. In terms of tissue distribution, ubiquitous.

The protein resides in the nucleus. Functionally, component of the Mediator complex, a coactivator involved in the regulated transcription of nearly all RNA polymerase II-dependent genes. Mediator functions as a bridge to convey information from gene-specific regulatory proteins to the basal RNA polymerase II transcription machinery. Mediator is recruited to promoters by direct interactions with regulatory proteins and serves as a scaffold for the assembly of a functional pre-initiation complex with RNA polymerase II and the general transcription factors. This subunit may specifically regulate transcription of targets of the Wnt signaling pathway and SHH signaling pathway. The protein is Mediator of RNA polymerase II transcription subunit 12 (MED12) of Homo sapiens (Human).